A 173-amino-acid chain; its full sequence is Protein SHI RELATED SEQUENCE 8 (173 aa).

Zn(2+) is bound by residues C52, C63, C68, C72, and C79. Residues C52 to C79 constitute a DNA-binding region (zn(2)-C6 fungal-type; degenerate). Residues L100 to P110 are compositionally biased toward low complexity. The interval L100 to E121 is disordered.

This sequence belongs to the SHI protein family.

Its subcellular location is the nucleus. Its function is as follows. Transcription activator that binds DNA on 5'-ACTCTAC-3' and promotes auxin homeostasis-regulating gene expression (e.g. YUC genes), as well as genes affecting stamen development, cell expansion and timing of flowering. Synergistically with other SHI-related proteins, regulates gynoecium, stamen and leaf development in a dose-dependent manner, controlling apical-basal patterning. Promotes style and stigma formation, and influence vascular development during gynoecium development. May also have a role in the formation and/or maintenance of the shoot apical meristem (SAM). The polypeptide is Protein SHI RELATED SEQUENCE 8 (SRS8) (Arabidopsis thaliana (Mouse-ear cress)).